Reading from the N-terminus, the 584-residue chain is Chaperonin GroEL 1 (584 aa).

ATP is bound by residues 29 to 32 (TIGP), 86 to 90 (DGTTT), Gly-413, and Asp-492. Residues 523–542 (EPEAAAPGGPGGDPMGGMGG) are disordered. Residues 530–542 (GGPGGDPMGGMGG) show a composition bias toward gly residues.

Belongs to the chaperonin (HSP60) family. Forms a cylinder of 14 subunits composed of two heptameric rings stacked back-to-back. Interacts with the co-chaperonin GroES.

It is found in the cytoplasm. It catalyses the reaction ATP + H2O + a folded polypeptide = ADP + phosphate + an unfolded polypeptide.. Its function is as follows. Together with its co-chaperonin GroES, plays an essential role in assisting protein folding. The GroEL-GroES system forms a nano-cage that allows encapsulation of the non-native substrate proteins and provides a physical environment optimized to promote and accelerate protein folding. This chain is Chaperonin GroEL 1, found in Prochlorococcus marinus (strain MIT 9312).